The sequence spans 303 residues: 2-dehydropantoate 2-reductase (303 aa).

Residues 7–12 (GCGALG), asparagine 98, and alanine 122 contribute to the NADP(+) site. Residue asparagine 98 participates in substrate binding. The Proton donor role is filled by lysine 176. Residues asparagine 180, asparagine 184, asparagine 194, and serine 244 each coordinate substrate. Residue glutamate 256 coordinates NADP(+).

The protein belongs to the ketopantoate reductase family.

It localises to the cytoplasm. It catalyses the reaction (R)-pantoate + NADP(+) = 2-dehydropantoate + NADPH + H(+). Its pathway is cofactor biosynthesis; (R)-pantothenate biosynthesis; (R)-pantoate from 3-methyl-2-oxobutanoate: step 2/2. Functionally, catalyzes the NADPH-dependent reduction of ketopantoate into pantoic acid. The polypeptide is 2-dehydropantoate 2-reductase (panE) (Yersinia pestis).